We begin with the raw amino-acid sequence, 377 residues long: Subtilisin-like protease CPC735_012930 (377 aa).

The first 20 residues, 1 to 20, serve as a signal peptide directing secretion; the sequence is MSILFKIFASTLAVVSVVNA. The propeptide occupies 21–118; it reads GELLNFENER…VEPDRMASAT (98 aa). The Inhibitor I9 domain occupies 36-114; the sequence is SYIVVMKDGT…HVKYVEPDRM (79 aa). The Peptidase S8 domain occupies 128 to 377; that stretch reads SWGLGRISHT…NKLLYNKSGF (250 aa). Residues Asp160 and His191 each act as charge relay system in the active site. Asn252 carries N-linked (GlcNAc...) asparagine glycosylation. Ser323 serves as the catalytic Charge relay system. Residues Asn364 and Asn373 are each glycosylated (N-linked (GlcNAc...) asparagine).

The protein belongs to the peptidase S8 family.

It is found in the secreted. Functionally, secreted subtilisin-like serine protease with keratinolytic activity that contributes to pathogenicity. The sequence is that of Subtilisin-like protease CPC735_012930 from Coccidioides posadasii (strain C735) (Valley fever fungus).